Reading from the N-terminus, the 356-residue chain is UDP-N-acetylglucosamine--N-acetylmuramyl-(pentapeptide) pyrophosphoryl-undecaprenol N-acetylglucosamine transferase (356 aa).

UDP-N-acetyl-alpha-D-glucosamine contacts are provided by residues 12–14 (TGG), asparagine 124, arginine 163, serine 188, isoleucine 242, and glutamine 287.

The protein belongs to the glycosyltransferase 28 family. MurG subfamily.

It is found in the cell inner membrane. It carries out the reaction di-trans,octa-cis-undecaprenyl diphospho-N-acetyl-alpha-D-muramoyl-L-alanyl-D-glutamyl-meso-2,6-diaminopimeloyl-D-alanyl-D-alanine + UDP-N-acetyl-alpha-D-glucosamine = di-trans,octa-cis-undecaprenyl diphospho-[N-acetyl-alpha-D-glucosaminyl-(1-&gt;4)]-N-acetyl-alpha-D-muramoyl-L-alanyl-D-glutamyl-meso-2,6-diaminopimeloyl-D-alanyl-D-alanine + UDP + H(+). It participates in cell wall biogenesis; peptidoglycan biosynthesis. Its function is as follows. Cell wall formation. Catalyzes the transfer of a GlcNAc subunit on undecaprenyl-pyrophosphoryl-MurNAc-pentapeptide (lipid intermediate I) to form undecaprenyl-pyrophosphoryl-MurNAc-(pentapeptide)GlcNAc (lipid intermediate II). The protein is UDP-N-acetylglucosamine--N-acetylmuramyl-(pentapeptide) pyrophosphoryl-undecaprenol N-acetylglucosamine transferase of Pseudomonas fluorescens (strain Pf0-1).